We begin with the raw amino-acid sequence, 151 residues long: Nucleoside diphosphate kinase (151 aa).

Residues Lys-11, Phe-59, Arg-87, Thr-93, Arg-104, and Asn-114 each contribute to the ATP site. Residue His-117 is the Pros-phosphohistidine intermediate of the active site.

This sequence belongs to the NDK family. As to quaternary structure, homohexamer. Requires Mg(2+) as cofactor.

The catalysed reaction is a 2'-deoxyribonucleoside 5'-diphosphate + ATP = a 2'-deoxyribonucleoside 5'-triphosphate + ADP. It catalyses the reaction a ribonucleoside 5'-diphosphate + ATP = a ribonucleoside 5'-triphosphate + ADP. Functionally, major role in the synthesis of nucleoside triphosphates other than ATP. The ATP gamma phosphate is transferred to the NDP beta phosphate via a ping-pong mechanism, using a phosphorylated active-site intermediate. In Ginglymostoma cirratum (Nurse shark), this protein is Nucleoside diphosphate kinase.